We begin with the raw amino-acid sequence, 338 residues long: Heme A synthase (338 aa).

5 consecutive transmembrane segments (helical) span residues 6–26 (ITKW…IGGI), 93–113 (GRIT…KGII), 118–138 (IAPY…GWYM), 154–174 (LAFH…QLIK), and 201–221 (VIYL…GLIY). His-256 serves as a coordination point for heme. A run of 3 helical transmembrane segments spans residues 258–278 (LGGY…LKIE), 285–305 (IAYF…ITLL), and 308–328 (VPII…SVII). His-316 contributes to the heme binding site.

Belongs to the COX15/CtaA family. Type 2 subfamily. In terms of assembly, interacts with CtaB. Heme b is required as a cofactor.

The protein localises to the cell membrane. It catalyses the reaction Fe(II)-heme o + 2 A + H2O = Fe(II)-heme a + 2 AH2. The protein operates within porphyrin-containing compound metabolism; heme A biosynthesis; heme A from heme O: step 1/1. In terms of biological role, catalyzes the conversion of heme O to heme A by two successive hydroxylations of the methyl group at C8. The first hydroxylation forms heme I, the second hydroxylation results in an unstable dihydroxymethyl group, which spontaneously dehydrates, resulting in the formyl group of heme A. The protein is Heme A synthase of Rickettsia canadensis (strain McKiel).